The primary structure comprises 317 residues: tRNA pseudouridine synthase B (317 aa).

The active-site Nucleophile is Asp47.

This sequence belongs to the pseudouridine synthase TruB family. Type 1 subfamily.

The enzyme catalyses uridine(55) in tRNA = pseudouridine(55) in tRNA. In terms of biological role, responsible for synthesis of pseudouridine from uracil-55 in the psi GC loop of transfer RNAs. In Shewanella frigidimarina (strain NCIMB 400), this protein is tRNA pseudouridine synthase B.